Reading from the N-terminus, the 1038-residue chain is Ubiquitin carboxyl-terminal hydrolase 36 (1038 aa).

2 disordered regions span residues 22–44 (LGGN…TNGS) and 107–148 (ANGH…PKPK). The span at 23-44 (GGNSSAGSSTDQAKSGEDTNGS) shows a compositional bias: polar residues. The region spanning 172-480 (TGMINVGNTC…NAYIMFFELD (309 aa)) is the USP domain. The Nucleophile role is filled by Cys-181. His-439 acts as the Proton acceptor in catalysis. 4 disordered regions span residues 487–794 (PAAN…SKTG), 818–881 (GSPV…SNGS), 912–985 (LLVD…YNQN), and 1000–1038 (RFGG…QQQT). Low complexity-rich tracts occupy residues 502-517 (STTP…PSPT), 546-559 (QQNQ…LQLG), and 587-606 (NGNK…KSIN). A phosphoserine mark is found at Ser-513 and Ser-515. Over residues 629–641 (TTAQLPSMPNMTE) the composition is skewed to polar residues. Phosphothreonine occurs at positions 658 and 662. Residues Ser-672 and Ser-674 each carry the phosphoserine modification. Polar residues predominate over residues 703-728 (TNGHSKTNGSHTNGSASSSVHVNNSK). Basic and acidic residues predominate over residues 729 to 746 (QKTDAIDEIFKSLKKSAD). Residue Ser-747 is modified to Phosphoserine. Residues 747-756 (SDEDDDEEEP) show a composition bias toward acidic residues. Residues 766–776 (PQKQSQSQSKA) are compositionally biased toward low complexity. Over residues 777–786 (PPSPKTPPSP) the composition is skewed to pro residues. Ser-779 carries the phosphoserine modification. A Phosphothreonine modification is found at Thr-782. Phosphoserine is present on residues Ser-785 and Ser-819. Phosphothreonine is present on Thr-825. The segment covering 832–844 (NPFSSSKPSTDSP) has biased composition (polar residues). Ser-843 bears the Phosphoserine mark. Thr-846 bears the Phosphothreonine mark. The span at 859–881 (ALKSHQQPRVGNGYQSNATSNGS) shows a compositional bias: polar residues. The span at 912-923 (LLVDAREQRQRD) shows a compositional bias: basic and acidic residues. Low complexity predominate over residues 942–953 (SGSAKGNNASNS).

Belongs to the peptidase C19 family. Interacts with atms/PAF1, but not with CycT. Interacts (via C-terminus) with imd (via N-terminus).

The protein resides in the nucleus. It localises to the nucleolus. Its subcellular location is the cytoplasm. It catalyses the reaction Thiol-dependent hydrolysis of ester, thioester, amide, peptide and isopeptide bonds formed by the C-terminal Gly of ubiquitin (a 76-residue protein attached to proteins as an intracellular targeting signal).. In terms of biological role, hydrolase that deubiquitinates polyubiquitinated target proteins including imd. Required for preventing the constitutive activation of the imd/NF-kappa-B (Imd) signaling cascade under unchalleneged conditions. Deubiquitinates imd linked 'Lys-63' chains which leads its proteasomal degradation and consequently down-regulation of the Imd signaling cascade. Removal of the activating 'Lys-63'-linked chains is likely to enable their replacement with 'Lys-48'-linked chains which act as 'tags' the for proteasomal degradation of imd. Required for maintaining multiple types of adult stem cells, including male and female germline, epithelial follicle cell and intestinal stem cells. May function as a transcriptional repressor by continually deubiquiting histone H2B at the promoters of genes critical for cellular differentiation, thereby preventing histone H3 'Lys-4' trimethylation (H3K4me3). Controls selective autophagy activation by ubiquitinated proteins. The protein is Ubiquitin carboxyl-terminal hydrolase 36 (scny) of Drosophila melanogaster (Fruit fly).